The chain runs to 105 residues: Putative ferredoxin-3 (105 aa).

4Fe-4S ferredoxin-type domains follow at residues 17–46 (YLTA…LHGI) and 70–100 (TIMV…HVAA). Residues C26, C29, C32, C36, C80, C83, C86, and C90 each contribute to the [4Fe-4S] cluster site.

Requires [4Fe-4S] cluster as cofactor.

In terms of biological role, ferredoxins are iron-sulfur proteins that transfer electrons in a wide variety of metabolic reactions. The polypeptide is Putative ferredoxin-3 (fdxB) (Sinorhizobium fredii (strain NBRC 101917 / NGR234)).